A 303-amino-acid polypeptide reads, in one-letter code: MPAATKDSDGGWKKFLWNSEKKEFLGRTGGSWAKILLFYVIFYGCLAGIFIGTIQALLLTINDFKPVYQDRVAPPGLSHTPRSEKSEMSFKVGDPSTYQKYVKAMHDFLQAYNDSKQENMMKYEDCGDTPKSYINRGELDNNQGIKKACIFRRSWLDKCSGLEDPTFGFSEGKPCLIVKLNRIVNFRPRPPTSNDSIPEEAQSKVQPDVIPIYCTNKREEDAAKVREIKYYGIQEGFPLQYYPYYGKQLHPQYLQPLVAVHFTNLTMATELRIECRVYGQNIAYSDKDRYRGRFDVKFTINES.

At 1 to 34 the chain is on the cytoplasmic side; the sequence is MPAATKDSDGGWKKFLWNSEKKEFLGRTGGSWAK. Residues 35–55 traverse the membrane as a helical; Signal-anchor for type II membrane protein segment; the sequence is ILLFYVIFYGCLAGIFIGTIQ. Topologically, residues 56–303 are extracellular; the sequence is ALLLTINDFK…FDVKFTINES (248 aa). N-linked (GlcNAc...) asparagine glycosylation occurs at Asn-113. Cystine bridges form between Cys-126–Cys-149 and Cys-159–Cys-175. Residues Asn-194 and Asn-264 are each glycosylated (N-linked (GlcNAc...) asparagine). A disulfide bridge links Cys-214 with Cys-275.

Belongs to the X(+)/potassium ATPases subunit beta family. In terms of assembly, the sodium/potassium-transporting ATPase is composed of a catalytic alpha subunit, an auxiliary non-catalytic beta subunit and an additional regulatory subunit. As to expression, detected in all tissues except liver and cardiac muscle. Highest levels found in intestine, ovary and kidney with marginally lower levels in brain, spleen, esophagus, eye and pancreas, intermediate levels in gill and low levels in white and red skeletal muscle.

It localises to the cell membrane. This is the non-catalytic component of the active enzyme, which catalyzes the hydrolysis of ATP coupled with the exchange of Na(+) and K(+) ions across the plasma membrane. The beta subunit regulates, through assembly of alpha/beta heterodimers, the number of sodium pumps transported to the plasma membrane. In Anguilla anguilla (European freshwater eel), this protein is Sodium/potassium-transporting ATPase subunit beta-1 (atp1b1).